The chain runs to 326 residues: Ficolin-1 (326 aa).

Positions 1-29 (MELSRVAVALGPTGQLLLFLSFQTLAAQA) are cleaved as a signal peptide. Residues 55–93 (GLPGAAGPKGEAGANGPKGERGSPGVVGKAGPAGPKGDR) enclose the Collagen-like domain. 2 stretches are compositionally biased toward low complexity: residues 61 to 71 (GPKGEAGANGP) and 78 to 89 (PGVVGKAGPAGP). The segment at 61-110 (GPKGEAGANGPKGERGSPGVVGKAGPAGPKGDRGEKGARGEKGEPGQLQS) is disordered. Basic and acidic residues predominate over residues 90–104 (KGDRGEKGARGEKGE). One can recognise a Fibrinogen C-terminal domain in the interval 109-326 (QSCATGPRTC…QVSEMKVRLT (218 aa)). Disulfide bonds link Cys111–Cys139 and Cys118–Cys146. Positions 115–154 (PRTCKELLTRGHFLSGWHTIYLPDCQPLTVLCDMDTDGGG) are a domain; contributes to trimerization. The segment at 155 to 243 (WTVFQRRSDG…LVLGGFLEGN (89 aa)) is b domain; contributes to trimerization. Positions 262 and 264 each coordinate Ca(2+). N-linked (GlcNAc...) asparagine glycosylation is present at Asn265. Residues Cys270 and Cys283 are joined by a disulfide bond. Residue 282–284 (ACH) coordinates a carbohydrate. A glycan (N-linked (GlcNAc...) asparagine) is linked at Asn313. The tract at residues 317-326 (QVSEMKVRLT) is p domain.

This sequence belongs to the ficolin lectin family. As to quaternary structure, homotrimer. Interacts with elastin/ELN. Interacts (via Fibrinogen C-terminal domain) with FFAR2. Interacts with CRP; may regulate monocyte activation by FCN1. In terms of tissue distribution, most abundantly expressed in placenta and lung.

It localises to the secreted. It is found in the cell membrane. Functionally, extracellular lectin functioning as a pattern-recognition receptor in innate immunity. Binds the sugar moieties of pathogen-associated molecular patterns (PAMPs) displayed on microbes and activates the lectin pathway of the complement system. May also activate monocytes through a G protein-coupled receptor, FFAR2, inducing the secretion of interleukin-8/IL-8. Binds preferentially to 9-O-acetylated 2-6-linked sialic acid derivatives and to various glycans containing sialic acid engaged in a 2-3 linkage. In Sus scrofa (Pig), this protein is Ficolin-1 (FCN1).